Reading from the N-terminus, the 540-residue chain is 2,3-bisphosphoglycerate-independent phosphoglycerate mutase (540 aa).

Residues Asp-24 and Ser-74 each coordinate Mn(2+). The Phosphoserine intermediate role is filled by Ser-74. Substrate contacts are provided by residues His-135, 165–166 (RD), Arg-197, Arg-203, 268–271 (RPDR), and Lys-341. Residues Asp-408, His-412, Asp-449, His-450, and His-467 each contribute to the Mn(2+) site.

It belongs to the BPG-independent phosphoglycerate mutase family. Monomer. Mn(2+) serves as cofactor.

It catalyses the reaction (2R)-2-phosphoglycerate = (2R)-3-phosphoglycerate. It functions in the pathway carbohydrate degradation; glycolysis; pyruvate from D-glyceraldehyde 3-phosphate: step 3/5. Catalyzes the interconversion of 2-phosphoglycerate and 3-phosphoglycerate. This is 2,3-bisphosphoglycerate-independent phosphoglycerate mutase from Prochlorococcus marinus (strain SARG / CCMP1375 / SS120).